Reading from the N-terminus, the 472-residue chain is Protein hedgehog (472 aa).

C84 is lipidated: N-palmitoyl cysteine. The Ca(2+) site is built by E149, D154, E185, D188, and D190. G256 carries Cholesterol glycine ester lipidation.

It belongs to the hedgehog family. In terms of assembly, interacts with shf. Post-translationally, the C-terminal part of the hedgehog protein precursor displays an autoproteolysis activity that results in the cleavage of the full-length protein into two parts (N-product and C-product). In addition, the C-terminal part displays a cholesterol transferase activity that results by the covalent attachment of a cholesterol moiety to the C-terminal of the newly generated N-product. The N-product is the active species in both local and long-range signaling, whereas the C-product has no signaling activity. In terms of processing, cholesterylation is required for N-product targeting to lipid rafts and multimerization. N-palmitoylation by Rasp of the hedgehog N-product, within the secretory pathway, is required for the embryonic and larval patterning activities of the hedgehog signal.

The protein localises to the nucleus. It is found in the cytoplasm. The protein resides in the cell membrane. It carries out the reaction glycyl-L-cysteinyl-[protein] + cholesterol + H(+) = [protein]-C-terminal glycyl cholesterol ester + N-terminal L-cysteinyl-[protein]. The C-terminal part of the hedgehog protein precursor displays an autoproteolysis activity that results in the cleavage of the full-length protein into two parts (N-product and C-product). In addition, the C-terminal part displays a cholesterol transferase activity that results by the covalent attachment of a cholesterol moiety to the C-terminal of the newly generated N-product. Once cleaved, the C-product has no signaling activity and diffuses from the cell. Its function is as follows. The dually lipidated hedgehog protein N-product is a morphogen which is essential for a variety of patterning events during development. Establishes the anterior-posterior axis of the embryonic segments and patterns the larval imaginal disks. Binds to the patched (ptc) receptor, which functions in association with smoothened (smo), to activate the transcription of target genes wingless (wg), decapentaplegic (dpp) and ptc. In the absence of hh, ptc represses the constitutive signaling activity of smo through fused (fu). Essential component of a signaling pathway which regulates the Duox-dependent gut immune response to bacterial uracil; required to activate Cad99C-dependent endosome formation, norpA-dependent Ca2+ mobilization and p38 MAPK, which are essential steps in the Duox-dependent production of reactive oxygen species (ROS) in response to intestinal bacterial infection. During photoreceptor differentiation, it up-regulates transcription of Ubr3, which in turn promotes the hh-signaling pathway by mediating the ubiquitination and degradation of cos. In Drosophila ananassae (Fruit fly), this protein is Protein hedgehog.